Here is a 236-residue protein sequence, read N- to C-terminus: Small ribosomal subunit protein uS2c (236 aa).

This sequence belongs to the universal ribosomal protein uS2 family.

The protein resides in the plastid. The protein localises to the chloroplast. This is Small ribosomal subunit protein uS2c (rps2) from Eucalyptus globulus subsp. globulus (Tasmanian blue gum).